Reading from the N-terminus, the 55-residue chain is Large ribosomal subunit protein bL33 (55 aa).

This sequence belongs to the bacterial ribosomal protein bL33 family.

The chain is Large ribosomal subunit protein bL33 from Buchnera aphidicola subsp. Acyrthosiphon pisum (strain 5A).